A 355-amino-acid polypeptide reads, in one-letter code: MHC class I-like protein MILL2 (355 aa).

Residues 1–29 form the signal peptide; sequence MKASSGKPREFRPAVLLLILGLLLRDSRG. An alpha-1 region spans residues 46 to 137; it reads RLTRTHTLRY…VINQKSQEEG (92 aa). 3 disulfides stabilise this stretch: cysteine 96–cysteine 107, cysteine 147–cysteine 210, and cysteine 249–cysteine 306. N-linked (GlcNAc...) asparagine glycans are attached at residues asparagine 104 and asparagine 152. Positions 138–229 are alpha-2; the sequence is LHTLQATLGC…SLRNGLQDTG (92 aa). The interval 230–323 is alpha-3; that stretch reads PPMVTVTCRN…SIMQTAVSGH (94 aa). The Ig-like C1-type domain occupies 231–321; the sequence is PMVTVTCRNY…NHSIMQTAVS (91 aa). Residue asparagine 312 is glycosylated (N-linked (GlcNAc...) asparagine). A connecting peptide region spans residues 324-329; that stretch reads AAEDSQ. Aspartate 330 carries GPI-anchor amidated aspartate lipidation. A propeptide spans 331-355 (removed in mature form); sequence VASSATASAGSALPVVLAVALARAN.

It belongs to the MHC class I family. As to quaternary structure, heterodimer with B2M (beta-2-microglobulin). Post-translationally, N-glycosylated. In terms of tissue distribution, ubiquitously expressed in neonatal and adult tissues.

The protein localises to the cell membrane. Its function is as follows. Binds to heparan sulfate proteoglycans on the surface of fibroblast (NIH-3T3) cells. In Mus musculus (Mouse), this protein is MHC class I-like protein MILL2.